Reading from the N-terminus, the 459-residue chain is tRNA modification GTPase MnmE (459 aa).

(6S)-5-formyl-5,6,7,8-tetrahydrofolate-binding residues include R23, E86, and R125. A TrmE-type G domain is found at 221–380 (GIDAVIIGKP…LENAITELFV (160 aa)). A K(+)-binding site is contributed by N231. GTP contacts are provided by residues 231 to 236 (NVGKSS), 250 to 256 (TDIPGTT), and 275 to 278 (DTAG). S235 lines the Mg(2+) pocket. K(+) contacts are provided by T250, I252, and T255. T256 contacts Mg(2+). K459 is a (6S)-5-formyl-5,6,7,8-tetrahydrofolate binding site.

Belongs to the TRAFAC class TrmE-Era-EngA-EngB-Septin-like GTPase superfamily. TrmE GTPase family. As to quaternary structure, homodimer. Heterotetramer of two MnmE and two MnmG subunits. K(+) serves as cofactor.

It is found in the cytoplasm. In terms of biological role, exhibits a very high intrinsic GTPase hydrolysis rate. Involved in the addition of a carboxymethylaminomethyl (cmnm) group at the wobble position (U34) of certain tRNAs, forming tRNA-cmnm(5)s(2)U34. The protein is tRNA modification GTPase MnmE of Acetivibrio thermocellus (strain ATCC 27405 / DSM 1237 / JCM 9322 / NBRC 103400 / NCIMB 10682 / NRRL B-4536 / VPI 7372) (Clostridium thermocellum).